A 224-amino-acid chain; its full sequence is Large ribosomal subunit protein uL4 (224 aa).

The segment at 53–74 (RNRSEVSHSTKKPFKQKGTGNA) is disordered.

The protein belongs to the universal ribosomal protein uL4 family. Part of the 50S ribosomal subunit.

In terms of biological role, one of the primary rRNA binding proteins, this protein initially binds near the 5'-end of the 23S rRNA. It is important during the early stages of 50S assembly. It makes multiple contacts with different domains of the 23S rRNA in the assembled 50S subunit and ribosome. Its function is as follows. Forms part of the polypeptide exit tunnel. In Chlamydia pneumoniae (Chlamydophila pneumoniae), this protein is Large ribosomal subunit protein uL4.